The chain runs to 298 residues: MSDQALSFLKDFLAGGVAAAISKTAVAPIERVKLLLQVQHASKQISAEKQYKGIIDCVVRIPKEQGFLSFWRGNLANVIRYFPTQALNFAFKDKYKQIFLGGVDRHKQFWRYFAGNLASGGAAGATSLCFVYPLDFARTRLAADVGKGAAQREFTGLGNCITKIFKSDGLRGLYQGFNVSVQGIIIYRAAYFGVYDTAKGMLPDPKNVHIIVSWMIAQTVTAVAGLVSYPFDTVRRRMMMQSGRKGADIMYTGTVDCWRKIAKDEGPKAFFKGAWSNVLRGMGGAFVLVLYDEIKKFV.

Over 1 to 7 the chain is Mitochondrial intermembrane; the sequence is MSDQALS. Serine 2 bears the N-acetylserine mark. One copy of the Solcar 1 repeat lies at 6–98; the sequence is LSFLKDFLAG…FAFKDKYKQI (93 aa). Serine 7 carries the post-translational modification Phosphoserine. Residues 8 to 37 traverse the membrane as a helical segment; that stretch reads FLKDFLAGGVAAAISKTAVAPIERVKLLLQ. Over 38–74 the chain is Mitochondrial matrix; that stretch reads VQHASKQISAEKQYKGIIDCVVRIPKEQGFLSFWRGN. Lysine 52 bears the N6,N6,N6-trimethyllysine mark. Lysine 52 carries the post-translational modification N6-methyllysine. Residues 75–99 traverse the membrane as a helical segment; the sequence is LANVIRYFPTQALNFAFKDKYKQIF. The ADP site is built by arginine 80 and lysine 92. Residues 100–109 lie on the Mitochondrial intermembrane side of the membrane; the sequence is LGGVDRHKQF. A helical membrane pass occupies residues 110–130; that stretch reads WRYFAGNLASGGAAGATSLCF. Solcar repeat units follow at residues 111–201 and 212–297; these read RYFA…AKGM and VSWM…IKKF. Over 131 to 178 the chain is Mitochondrial matrix; sequence VYPLDFARTRLAADVGKGAAQREFTGLGNCITKIFKSDGLRGLYQGFN. At lysine 147 the chain carries N6-succinyllysine. Cysteine 160 carries the post-translational modification S-nitrosocysteine. The helical transmembrane segment at 179 to 199 threads the bilayer; sequence VSVQGIIIYRAAYFGVYDTAK. Residues 200–210 lie on the Mitochondrial intermembrane side of the membrane; that stretch reads GMLPDPKNVHI. The chain crosses the membrane as a helical span at residues 211–231; that stretch reads IVSWMIAQTVTAVAGLVSYPF. Topologically, residues 232-273 are mitochondrial matrix; the sequence is DTVRRRMMMQSGRKGADIMYTGTVDCWRKIAKDEGPKAFFKG. Arginine 235 is an ADP binding site. Residues 235–240 form an important for transport activity region; sequence RRRMMM. Residues 235–240 carry the Nucleotide carrier signature motif motif; it reads RRRMMM. N6-succinyllysine occurs at positions 245 and 272. The chain crosses the membrane as a helical span at residues 274–291; it reads AWSNVLRGMGGAFVLVLY. The Mitochondrial intermembrane segment spans residues 292 to 298; the sequence is DEIKKFV.

Belongs to the mitochondrial carrier (TC 2.A.29) family. Monomer. Found in a complex with ARL2, ARL2BP and SLC25A4/ANT1. Interacts with ARL2BP. Interacts with TIMM44; leading to inhibit the presequence translocase TIMM23, thereby promoting stabilization of PINK1. Post-translationally, under cell death induction, transglutaminated by TGM2. Transglutamination leads to formation of covalent cross-links between a glutamine and the epsilon-amino group of a lysine residue, forming polymers. As to expression, detected in heart muscle (at protein level). Detected in heart.

It localises to the mitochondrion inner membrane. The protein resides in the membrane. It catalyses the reaction ADP(in) + ATP(out) = ADP(out) + ATP(in). The catalysed reaction is H(+)(in) = H(+)(out). With respect to regulation, the matrix-open state (m-state) is inhibited by the membrane-permeable bongkrekic acid (BKA). The cytoplasmic-open state (c-state) is inhibited by the membrane-impermeable toxic inhibitor carboxyatractyloside (CATR). Proton transporter activity is inhibited by ADP:ATP antiporter activity. Its function is as follows. ADP:ATP antiporter that mediates import of ADP into the mitochondrial matrix for ATP synthesis, and export of ATP out to fuel the cell. Cycles between the cytoplasmic-open state (c-state) and the matrix-open state (m-state): operates by the alternating access mechanism with a single substrate-binding site intermittently exposed to either the cytosolic (c-state) or matrix (m-state) side of the inner mitochondrial membrane. In addition to its ADP:ATP antiporter activity, also involved in mitochondrial uncoupling and mitochondrial permeability transition pore (mPTP) activity. Plays a role in mitochondrial uncoupling by acting as a proton transporter: proton transport uncouples the proton flows via the electron transport chain and ATP synthase to reduce the efficiency of ATP production and cause mitochondrial thermogenesis. Proton transporter activity is inhibited by ADP:ATP antiporter activity, suggesting that SLC25A4/ANT1 acts as a master regulator of mitochondrial energy output by maintaining a delicate balance between ATP production (ADP:ATP antiporter activity) and thermogenesis (proton transporter activity). Proton transporter activity requires free fatty acids as cofactor, but does not transport it. Probably mediates mitochondrial uncoupling in tissues that do not express UCP1. Also plays a key role in mPTP opening, a non-specific pore that enables free passage of the mitochondrial membranes to solutes of up to 1.5 kDa, and which contributes to cell death. It is however unclear if SLC25A4/ANT1 constitutes a pore-forming component of mPTP or regulates it. Acts as a regulator of mitophagy independently of ADP:ATP antiporter activity: promotes mitophagy via interaction with TIMM44, leading to inhibit the presequence translocase TIMM23, thereby promoting stabilization of PINK1. The sequence is that of ADP/ATP translocase 1 from Bos taurus (Bovine).